Consider the following 114-residue polypeptide: uncharacterized protein (114 aa).

2 consecutive transmembrane segments (helical) span residues 9–29 (LAIF…SFWL) and 75–95 (LVHF…VAII).

The protein localises to the cell membrane. This is an uncharacterized protein from Mycoplasma pneumoniae (strain ATCC 29342 / M129 / Subtype 1) (Mycoplasmoides pneumoniae).